Here is a 283-residue protein sequence, read N- to C-terminus: MDKVIEMFSDYLAHVRRHSENTLKAYKKDVRKFLTYVGKQINNIERKDVEEFLKALSKGDITGESPRETTISRYISSLNSFFNYLELSGMIYENPMERIKHPRIRRKIPDFLTEDEVSSLIGAFNEENELRQKTAISLLYYAGLRISELCNLRTTDISFIPPFLRVEMGKGRKDRLVPLPDKVIPILKKYIDLENPKIFVFENGKKHVHPSTVFRWLKEGVKRANIKKDVHPHTLRHSYATHLIRKGVNIKVVQELLGHTNLSTTSIYLHVADQEKFDAVKKL.

Residues 1 to 86 (MDKVIEMFSD…SLNSFFNYLE (86 aa)) form the Core-binding (CB) domain. The Tyr recombinase domain maps to 107-281 (KIPDFLTEDE…ADQEKFDAVK (175 aa)). Active-site residues include Arg145, Lys170, His233, Arg236, and His259. Tyr268 serves as the catalytic O-(3'-phospho-DNA)-tyrosine intermediate.

This sequence belongs to the 'phage' integrase family.

It localises to the cytoplasm. Site-specific tyrosine recombinase, which acts by catalyzing the cutting and rejoining of the recombining DNA molecules. This Thermosipho africanus (strain TCF52B) protein is Tyrosine recombinase THA_404.